The following is a 239-amino-acid chain: IkB-like protein (239 aa).

ANK repeat units lie at residues 48–80 (SKIT…EIIS), 87–118 (DGNS…GIKV), 124–153 (NGIT…NPNQ), and 158–187 (KGFN…KPLF). Positions 81–87 (HYRRDKD) match the Nuclear localization signal motif. A Nuclear localization signal motif is present at residues 203 to 214 (KKKPKIIITSCE). Residues 206–213 (PKIIITSC) carry the PxIxITxC motif; Interaction with host PPP3CA motif. Residues 228-231 (FLCV) carry the FLCV motif motif.

The protein belongs to the asfivirus A238L family. In terms of assembly, interacts with host PPIA. Interacts with host PPP3CA/Calcineurin. Interacts with host RELA/p65; interaction of the 32 kDa form with host RELA results in the formation of a stable complex with NF-kappa-B. Interacts with host PPP3R1. Interacts with host EP300; this interaction inhibits the association of host EP300 with host RELA, JUN and NFATC2. In terms of processing, the protein exists in a 28 kDa and a 32 kDa form, probably due to post-translational modifications which are neither phosphorylation, nor sumoylation.

It is found in the host nucleus. Its subcellular location is the host cytoplasm. In terms of biological role, ikB-like protein that inhibits the binding of NF-kappa-B to DNA, thereby downregulating pro-inflammatory cytokine production. Forms a heterodimer with the NF-kappa-B subunit RELA/p65 and prevents the activation of the NF-kappa-B transcription factor. Inhibits calcineurin function, which is required for the induction of nuclear factor of activated T cells (NFAT)-dependent immune response genes. Prevents the binding of substrates to calcineurin without affecting the phosphatase activity. Does not contain the serine residues that are phosphorylated by host IkB kinase and thus is not degraded following stimulation of the NFkB pathway. The polypeptide is IkB-like protein (A238L) (Ornithodoros (relapsing fever ticks)).